An 862-amino-acid chain; its full sequence is Cone cGMP-specific 3',5'-cyclic phosphodiesterase subunit alpha' (862 aa).

GAF domains are found at residues 75–224 (SMEK…SLVL) and 256–433 (DIER…GWSV). 3',5'-cyclic GMP is bound by residues Ser97, Asn116, 169 to 172 (DKKT), and Thr176. Residues 486-819 (DEKDLIRILK…VEWKTRADEY (334 aa)) enclose the PDEase domain. Residue His562 is the Proton donor of the active site. 4 residues coordinate a divalent metal cation: His566, His602, Asp603, and Asp723. The segment covering 830–842 (KKKEEEAAAKKAE) has biased composition (basic and acidic residues). The interval 830 to 862 (KKKEEEAAAKKAENAAGGGGGGEDGKSKTCIVL) is disordered. Residue Cys859 is modified to Cysteine methyl ester. Cys859 is lipidated: S-geranylgeranyl cysteine. A propeptide spans 860–862 (IVL) (removed in mature form).

It belongs to the cyclic nucleotide phosphodiesterase family. In terms of assembly, composed of two alpha' subunits that are associated with 3 smaller proteins of 11, 13, and 15 kDa. It depends on a divalent metal cation as a cofactor.

The protein localises to the cell membrane. It catalyses the reaction 3',5'-cyclic GMP + H2O = GMP + H(+). Its function is as follows. As cone-specific cGMP phosphodiesterase, it plays an essential role in light detection and cone phototransduction by rapidly decreasing intracellular levels of cGMP. This is Cone cGMP-specific 3',5'-cyclic phosphodiesterase subunit alpha' (PDE6C) from Gallus gallus (Chicken).